We begin with the raw amino-acid sequence, 180 residues long: Ribosome maturation factor RimM (180 aa).

One can recognise a PRC barrel domain in the interval 104-177 (EGEFHLLDLV…WLLLTPPPGL (74 aa)).

This sequence belongs to the RimM family. Binds ribosomal protein uS19.

The protein resides in the cytoplasm. An accessory protein needed during the final step in the assembly of 30S ribosomal subunit, possibly for assembly of the head region. Essential for efficient processing of 16S rRNA. May be needed both before and after RbfA during the maturation of 16S rRNA. It has affinity for free ribosomal 30S subunits but not for 70S ribosomes. This chain is Ribosome maturation factor RimM, found in Synechococcus sp. (strain CC9902).